We begin with the raw amino-acid sequence, 133 residues long: Protein archease (133 aa).

Asp11, Asp132, and Leu133 together coordinate Ca(2+).

Belongs to the archease family.

Activates the tRNA-splicing ligase complex by facilitating the enzymatic turnover of catalytic subunit RtcB. Acts by promoting the guanylylation of RtcB, a key intermediate step in tRNA ligation. Can also alter the NTP specificity of RtcB such that ATP, dGTP or ITP is used efficiently. The sequence is that of Protein archease from Thermoplasma volcanium (strain ATCC 51530 / DSM 4299 / JCM 9571 / NBRC 15438 / GSS1).